An 826-amino-acid polypeptide reads, in one-letter code: Hyaluronate lyase HylA (826 aa).

A signal peptide (tat-type signal) is located at residues 1-36 (MFDIPYQVPSRRTFLSLSALSAIAIAASPEMPDAFA). Catalysis depends on residues His-276, Tyr-285, and Arg-339. Residues 800-826 (LSPALPKPTKPSLRASSYPLGLPHTSS) are disordered.

This sequence belongs to the polysaccharide lyase 8 family. Predicted to be exported by the Tat system. The position of the signal peptide cleavage has not been experimentally proven.

It localises to the secreted. It catalyses the reaction [hyaluronan](n) = n 3-(4-deoxy-beta-D-gluc-4-enuronosyl)-N-acetyl-D-glucosamine + H2O. Its function is as follows. Degrades hyaluronic acid (HA) into large-sized HA oligosaccharides, including tetrasaccharide HA (HA-4), hexasaccharide HA (HA-6) and higher molecular weight HA, and to a lesser extent into HA disaccharides (HA-2). Involved in the pathogenesis of acne. HA degradation products induce secretion of proinflammatory cytokines (IL-6, IL-8 and TNF-alpha) from human HaCaT keratinocyte cell line and from mouse bone marrow derived macrophages (BMDMs). Produced HA fragments also direct robust TLR2-dependent inflammation in the mouse model of acne. The chain is Hyaluronate lyase HylA from Cutibacterium acnes (Propionibacterium acnes).